The chain runs to 238 residues: DNA repair protein RecO (238 aa).

This sequence belongs to the RecO family.

Involved in DNA repair and RecF pathway recombination. This Aliivibrio salmonicida (strain LFI1238) (Vibrio salmonicida (strain LFI1238)) protein is DNA repair protein RecO.